The chain runs to 249 residues: MNMSQSQKIVLQPRSIVVPGELLAEGEFQIPWSPYILKINSKYYSTVVGLFDVKDTQFEVIPLEGSFYYPKINDIVIGLVEDVEIYGWVVDIKAPYKAYLPASNLLGRSINVGEDLRRYLDVGDYVIARIENFDRSIDPVLSVKGKDLGRVSNGIVIDIMPVKVPRVIGKNKSMYETLTSKSGCSIFVANNGRIWATCPSRFSEEILIEAIRKIENESHIKGLTDRIKQFIEEKLGERNASSGETKTNS.

The S1 motif domain maps to 73–144 (NDIVIGLVED…RSIDPVLSVK (72 aa)). The KH domain maps to 154 to 211 (GIVIDIMPVKVPRVIGKNKSMYETLTSKSGCSIFVANNGRIWATCPSRFSEEILIEAI).

It belongs to the RRP4 family. As to quaternary structure, component of the archaeal exosome complex. Forms a trimer of Rrp4 and/or Csl4 subunits. The trimer associates with a hexameric ring-like arrangement composed of 3 Rrp41-Rrp42 heterodimers.

The protein localises to the cytoplasm. Non-catalytic component of the exosome, which is a complex involved in RNA degradation. Increases the RNA binding and the efficiency of RNA degradation. Confers strong poly(A) specificity to the exosome. The chain is Exosome complex component Rrp4 from Saccharolobus solfataricus (strain ATCC 35092 / DSM 1617 / JCM 11322 / P2) (Sulfolobus solfataricus).